A 378-amino-acid polypeptide reads, in one-letter code: Heterogeneous nuclear ribonucleoprotein A3 (378 aa).

Methionine 1 bears the N-acetylmethionine mark. Over residues methionine 1–proline 10 the composition is skewed to pro residues. Residues methionine 1–leucine 34 form a disordered region. Residue lysine 4 forms a Glycyl lysine isopeptide (Lys-Gly) (interchain with G-Cter in SUMO2) linkage. Phosphoserine is present on serine 14. Residues arginine 21–leucine 34 show a composition bias toward basic and acidic residues. In terms of domain architecture, RRM 1 spans arginine 35–lysine 118. Lysine 36 is covalently cross-linked (Glycyl lysine isopeptide (Lys-Gly) (interchain with G-Cter in SUMO2)). Serine 43 carries the post-translational modification Phosphoserine. The residue at position 52 (arginine 52) is a Dimethylated arginine; alternate. Arginine 52 carries the omega-N-methylarginine; alternate modification. An Omega-N-methylarginine modification is found at arginine 76. Phosphoserine occurs at positions 112 and 116. Residue lysine 118 forms a Glycyl lysine isopeptide (Lys-Gly) (interchain with G-Cter in SUMO2) linkage. The residue at position 124 (threonine 124) is a Phosphothreonine. The RRM 2 domain maps to lysine 126–glutamine 205. The residue at position 134 (lysine 134) is an N6-acetyllysine; alternate. Lysine 134 participates in a covalent cross-link: Glycyl lysine isopeptide (Lys-Gly) (interchain with G-Cter in SUMO2); alternate. Glycyl lysine isopeptide (Lys-Gly) (interchain with G-Cter in SUMO2) cross-links involve residues lysine 151 and lysine 182. The interval lysine 204–glycine 225 is disordered. Omega-N-methylarginine; alternate occurs at positions 214, 216, 226, 239, and 246. Arginine 214, arginine 216, arginine 226, arginine 239, and arginine 246 each carry asymmetric dimethylarginine; alternate. A compositionally biased stretch (gly residues) spans arginine 214–glycine 225. Residue arginine 257 is modified to Omega-N-methylarginine. Arginine 286 is subject to Asymmetric dimethylarginine. Positions serine 336–phenylalanine 378 are disordered. Gly residues predominate over residues methionine 346–phenylalanine 378. A Phosphoserine modification is found at serine 350. Arginine 354 carries the post-translational modification Omega-N-methylarginine. Serine 358 is modified (phosphoserine). Phosphotyrosine occurs at positions 360 and 364. Phosphoserine occurs at positions 366 and 370. Phosphotyrosine is present on tyrosine 373. Position 375 is a phosphoserine (serine 375).

Identified in the spliceosome C complex.

Its subcellular location is the nucleus. Functionally, plays a role in cytoplasmic trafficking of RNA. Binds to the cis-acting response element, A2RE. May be involved in pre-mRNA splicing. This chain is Heterogeneous nuclear ribonucleoprotein A3 (HNRNPA3), found in Homo sapiens (Human).